The primary structure comprises 579 residues: Glypican-3 (579 aa).

Residues 1 to 24 form the signal peptide; it reads MAGTVRTACLLVAMLLGLGCLGQA. Glutamine 25 is modified (pyrrolidone carboxylic acid). 7 disulfides stabilise this stretch: cysteine 34/cysteine 71, cysteine 64/cysteine 261, cysteine 72/cysteine 264, cysteine 196/cysteine 348, cysteine 251/cysteine 284, cysteine 273/cysteine 421, and cysteine 277/cysteine 409. N-linked (GlcNAc...) asparagine glycans are attached at residues asparagine 123 and asparagine 240. Position 351 is a phosphoserine (serine 351). A glycan (N-linked (GlcNAc...) asparagine) is linked at asparagine 417. O-linked (Xyl...) (glycosaminoglycan) serine glycosylation is found at serine 494 and serine 508. The segment at 533 to 552 is disordered; sequence DAPGNKQHGNQKDNEITTSH. Residue serine 553 is the site of GPI-anchor amidated serine attachment. The propeptide at 554-579 is removed in mature form; that stretch reads VGNMPSPLKILISVAIYVACFFFLVH.

This sequence belongs to the glypican family. Heterodimer; disulfide-linked. Cleavage by a furin-like convertase results in production of alpha and beta chains which form a disulfide-linked heterodimer. Interacts with DPP4. Interacts with FGF2. Interacts with WNT5A. Also interacts with WNT3A and WNT7B. Interacts with hedgehog protein SHH; the heparan sulfate chains are not required for the interaction. Also interacts with hedgehog protein IHH. Interacts with CD81. Interacts with Wnt receptors FZD4, FZD7 and FZD8; the heparan sulfate chains are required for the interaction. In terms of processing, O-glycosylated; contains heparan sulfate and/or chondroitin sulfate. Cleaved intracellularly by a furin-like convertase to generate 2 subunits, alpha and beta, which remain associated through disulfide bonds and are associated with the cell surface via the GPI-anchor. This processing is essential for its role in inhibition of hedgehog signaling. A second proteolytic event may result in cleavage of the protein on the cell surface, separating it from the GPI-anchor and leading to its shedding from the cell surface. In terms of tissue distribution, in the developing limb, absent from the apical epidermal ridge at 11 dpc but highly expressed in the underlying mesenchyme. Expression in the mesenchyme at this stage is asymmetric with highest levels in the regions of the distal mesenchyme within the progress zone and within the proximal anterior and posterior limb bud. At later developmental stages including 12.5 and 13.5 dpc, expression is restricted to the interdigital webs and the regions of chondrocytic differentiation of the developing bones. In the embryonic kidney, expressed in both the ureteric bud and mesenchymal cells as early as 13.5 dpc. Expression at 16.5 dpc is similar to that at 13.5 dpc but decreases by 18.5 dpc.

The protein localises to the cell membrane. Its function is as follows. Cell surface proteoglycan. Negatively regulates the hedgehog signaling pathway when attached via the GPI-anchor to the cell surface by competing with the hedgehog receptor PTC1 for binding to hedgehog proteins. Binding to the hedgehog protein SHH triggers internalization of the complex by endocytosis and its subsequent lysosomal degradation. Positively regulates the canonical Wnt signaling pathway by binding to the Wnt receptor Frizzled and stimulating the binding of the Frizzled receptor to Wnt ligands. Positively regulates the non-canonical Wnt signaling pathway. Binds to CD81 which decreases the availability of free CD81 for binding to the transcriptional repressor HHEX, resulting in nuclear translocation of HHEX and transcriptional repression. Inhibits the dipeptidyl peptidase activity of DPP4. Plays a role in limb patterning and skeletal development by controlling the cellular response to BMP4. Modulates the effects of growth factors BMP2, BMP7 and FGF7 on renal branching morphogenesis. Required for coronary vascular development. Plays a role in regulating cell movements during gastrulation. The chain is Glypican-3 (Gpc3) from Mus musculus (Mouse).